The following is a 429-amino-acid chain: Tryptophan synthase beta chain 2 (429 aa).

The tract at residues 18–40 (NINPDLPSPLPEPKNPEGGKNIE) is disordered. Lysine 110 is modified (N6-(pyridoxal phosphate)lysine).

It belongs to the TrpB family. As to quaternary structure, tetramer of two alpha and two beta chains. Requires pyridoxal 5'-phosphate as cofactor.

The catalysed reaction is (1S,2R)-1-C-(indol-3-yl)glycerol 3-phosphate + L-serine = D-glyceraldehyde 3-phosphate + L-tryptophan + H2O. Its pathway is amino-acid biosynthesis; L-tryptophan biosynthesis; L-tryptophan from chorismate: step 5/5. The beta subunit is responsible for the synthesis of L-tryptophan from indole and L-serine. The sequence is that of Tryptophan synthase beta chain 2 (trpB2) from Methanothermobacter thermautotrophicus (strain ATCC 29096 / DSM 1053 / JCM 10044 / NBRC 100330 / Delta H) (Methanobacterium thermoautotrophicum).